The sequence spans 341 residues: Heat-inducible transcription repressor HrcA (341 aa).

Belongs to the HrcA family.

Functionally, negative regulator of class I heat shock genes (grpE-dnaK-dnaJ and groELS operons). Prevents heat-shock induction of these operons. The protein is Heat-inducible transcription repressor HrcA of Leptothrix cholodnii (strain ATCC 51168 / LMG 8142 / SP-6) (Leptothrix discophora (strain SP-6)).